The primary structure comprises 622 residues: Glutamyl-tRNA(Gln) amidotransferase subunit E (622 aa).

The protein belongs to the GatB/GatE family. GatE subfamily. In terms of assembly, heterodimer of GatD and GatE.

It carries out the reaction L-glutamyl-tRNA(Gln) + L-glutamine + ATP + H2O = L-glutaminyl-tRNA(Gln) + L-glutamate + ADP + phosphate + H(+). Its function is as follows. Allows the formation of correctly charged Gln-tRNA(Gln) through the transamidation of misacylated Glu-tRNA(Gln) in organisms which lack glutaminyl-tRNA synthetase. The reaction takes place in the presence of glutamine and ATP through an activated gamma-phospho-Glu-tRNA(Gln). The GatDE system is specific for glutamate and does not act on aspartate. This Halobacterium salinarum (strain ATCC 29341 / DSM 671 / R1) protein is Glutamyl-tRNA(Gln) amidotransferase subunit E.